We begin with the raw amino-acid sequence, 113 residues long: 2Fe-2S ferredoxin (113 aa).

The 2Fe-2S ferredoxin-type domain occupies 2–104 (PKVIFLPNED…DLVVEIPKYN (103 aa)). The [2Fe-2S] cluster site is built by cysteine 42, cysteine 48, cysteine 51, and cysteine 87.

Belongs to the adrenodoxin/putidaredoxin family. The cofactor is [2Fe-2S] cluster.

Its function is as follows. Ferredoxin are iron-sulfur proteins that transfer electrons in a wide variety of metabolic reactions. This is 2Fe-2S ferredoxin (fdx) from Haemophilus influenzae (strain ATCC 51907 / DSM 11121 / KW20 / Rd).